The following is a 957-amino-acid chain: Glycine dehydrogenase (decarboxylating) (957 aa).

Lysine 708 bears the N6-(pyridoxal phosphate)lysine mark.

Belongs to the GcvP family. The glycine cleavage system is composed of four proteins: P, T, L and H. The cofactor is pyridoxal 5'-phosphate.

It carries out the reaction N(6)-[(R)-lipoyl]-L-lysyl-[glycine-cleavage complex H protein] + glycine + H(+) = N(6)-[(R)-S(8)-aminomethyldihydrolipoyl]-L-lysyl-[glycine-cleavage complex H protein] + CO2. Functionally, the glycine cleavage system catalyzes the degradation of glycine. The P protein binds the alpha-amino group of glycine through its pyridoxal phosphate cofactor; CO(2) is released and the remaining methylamine moiety is then transferred to the lipoamide cofactor of the H protein. The polypeptide is Glycine dehydrogenase (decarboxylating) (Shigella dysenteriae serotype 1 (strain Sd197)).